Here is a 78-residue protein sequence, read N- to C-terminus: Large ribosomal subunit protein bL28 (78 aa).

The disordered stretch occupies residues M1 to A21.

This sequence belongs to the bacterial ribosomal protein bL28 family.

The polypeptide is Large ribosomal subunit protein bL28 (Shewanella baltica (strain OS223)).